Here is a 58-residue protein sequence, read N- to C-terminus: Large ribosomal subunit protein uL30 (58 aa).

Belongs to the universal ribosomal protein uL30 family. In terms of assembly, part of the 50S ribosomal subunit.

This chain is Large ribosomal subunit protein uL30, found in Cytophaga hutchinsonii (strain ATCC 33406 / DSM 1761 / CIP 103989 / NBRC 15051 / NCIMB 9469 / D465).